A 156-amino-acid polypeptide reads, in one-letter code: UPF0039 protein Mb2876c (156 aa).

The N-acetyltransferase domain maps to 8 to 150; that stretch reads VWAKDLDARA…PHVPMLRPGS (143 aa).

It belongs to the UPF0039 (ElaA) family.

This chain is UPF0039 protein Mb2876c, found in Mycobacterium bovis (strain ATCC BAA-935 / AF2122/97).